The following is a 112-amino-acid chain: Small ribosomal subunit protein bS6 (112 aa).

The protein belongs to the bacterial ribosomal protein bS6 family.

In terms of biological role, binds together with bS18 to 16S ribosomal RNA. In Chlamydia felis (strain Fe/C-56) (Chlamydophila felis), this protein is Small ribosomal subunit protein bS6.